Reading from the N-terminus, the 660-residue chain is Zinc transporter ZIP4 (660 aa).

Residues 1–22 form the signal peptide; it reads MLPKSVTQGLVLALLVGTVAVA. At 23–337 the chain is on the extracellular side; that stretch reads RPRNLLSLLA…QDQLSQTERY (315 aa). Disulfide bonds link Cys-56–Cys-61, Cys-64–Cys-110, and Cys-160–Cys-195. 2 N-linked (GlcNAc...) asparagine glycosylation sites follow: Asn-192 and Asn-219. Residues 233–273 form a disordered region; it reads GVGGEDHSDHDDHGDHADHSHPDRKASHQDSELHTPHNSNS. Basic and acidic residues predominate over residues 236 to 267; the sequence is GEDHSDHDDHGDHADHSHPDRKASHQDSELHT. An N-linked (GlcNAc...) asparagine glycan is attached at Asn-272. Cys-280 and Cys-319 are joined by a disulfide. A helical transmembrane segment spans residues 338–358; it reads LYGSLATLLICLCAVFGLLLL. Residues 359 to 376 lie on the Cytoplasmic side of the membrane; the sequence is TCAKCSTATHYIMQTFLS. Residues 377 to 397 form a helical membrane-spanning segment; that stretch reads LAVGALTGDALLHLIPKVLGL. Residues 398–420 are Extracellular-facing; it reads HTHGGEGHTHEEEVGVGGQATWR. A helical membrane pass occupies residues 421 to 441; sequence LLAVLGGFYIFFLFESFFNLL. Residues 442-511 lie on the Cytoplasmic side of the membrane; the sequence is LPRDQDSEKD…LRAELRLLPY (70 aa). The Essential for SLC39A4 endocytosis signature appears at 465-467; sequence LQL. A helical transmembrane segment spans residues 512–531; sequence LITLGDAVHNFADGLAVGAA. 3 residues coordinate Zn(2+): His-520, Asn-521, and Asp-524. The Extracellular segment spans residues 532–539; it reads FSSSWKTG. A helical membrane pass occupies residues 540–566; sequence LATSLAVFCHELPHELGDFAALLHAGL. Residues His-549, Glu-550, and His-553 each coordinate Zn(2+). Over 567-571 the chain is Cytoplasmic; sequence SVKRA. A helical membrane pass occupies residues 572 to 592; it reads LLLNLASALTAFAGLYVALAV. At 593 to 599 the chain is on the extracellular side; sequence GVGEEGE. Residues 600 to 620 traverse the membrane as a helical segment; it reads AWILAVATGLFLYVALCDMLP. The Cytoplasmic segment spans residues 621 to 630; it reads AMMNVRDQRP. Residues 631-651 form a helical membrane-spanning segment; it reads WLLFLLHNVGLLGGWTVLLLL. Over 652–660 the chain is Extracellular; the sequence is SLYEDNITF. N-linked (GlcNAc...) asparagine glycosylation occurs at Asn-657.

The protein belongs to the ZIP transporter (TC 2.A.5) family. As to quaternary structure, homodimer. Homodimerization is mediated by the transmembrane domain. In terms of processing, the extracellular N-terminal ectodomain is cleaved when cells are Zn(2+) deficient, N-terminally cleaved SLC39A4 is then internalized faster. Post-translationally, under excess Zn(2+) conditions, SLC39A4 on the cell surface is rapidly endocytosed, ubiquitinated, and degraded. N-glycosylated. In terms of tissue distribution, highly expressed in the small intestine and embryonic visceral yolk sac. Weakly expressed in the stomach and liver.

Its subcellular location is the cell membrane. The protein resides in the recycling endosome membrane. The protein localises to the apical cell membrane. It catalyses the reaction Zn(2+)(in) = Zn(2+)(out). Its function is as follows. Selective transporter that mediates the uptake of Zn(2+). Plays an essential role for dietary zinc uptake from small intestine. The Zn(2+) uniporter activity is regulated by zinc availability. Also exhibits polyspecific binding and transport of Cu(2+), Cd(2+) and possibly Ni(2+) but at higher concentrations. The protein is Zinc transporter ZIP4 (Slc39a4) of Mus musculus (Mouse).